We begin with the raw amino-acid sequence, 463 residues long: Retinoic acid receptor RXR-gamma (463 aa).

The interval 1-138 is modulating; that stretch reads MYGNYSHFMK…TSPGSLVKHI (138 aa). Positions 16–53 are disordered; the sequence is GGSPGHTGSTSMSPSVALPTGKPMDSHPSYTDTPVSAP. 2 consecutive NR C4-type zinc fingers follow at residues 139–159 and 175–199; these read CAIC…CEGC and CRDN…YQKC. The segment at residues 139–204 is a DNA-binding region (nuclear receptor); it reads CAICGDRSSG…RYQKCLVMGM (66 aa). Residues 205–230 form a hinge region; that stretch reads KREAVQEERQRSRERAESEAECASTG. The NR LBD domain maps to 231-459; sequence HEDMPVERIL…TFLMEMLETP (229 aa).

The protein belongs to the nuclear hormone receptor family. NR2 subfamily. As to quaternary structure, homodimer. Heterodimer with a RAR molecule. Binds DNA preferentially as a RAR/RXR heterodimer. Interacts with RARA. Acetylated by EP300. Expressed in the liver, but not detected in the adrenal gland (at protein level). Restricted expression in adrenal gland, kidney, liver, brain and lungs. Strong expression in heart and muscles.

The protein resides in the nucleus. It localises to the cytoplasm. Receptor for retinoic acid. Retinoic acid receptors bind as heterodimers to their target response elements in response to their ligands, all-trans or 9-cis retinoic acid, and regulate gene expression in various biological processes. The RAR/RXR heterodimers bind to the retinoic acid response elements (RARE) composed of tandem 5'-AGGTCA-3' sites known as DR1-DR5. The high affinity ligand for RXRs is 9-cis retinoic acid. The sequence is that of Retinoic acid receptor RXR-gamma (Rxrg) from Rattus norvegicus (Rat).